The chain runs to 102 residues: Small ribosomal subunit protein uS14 (102 aa).

This sequence belongs to the universal ribosomal protein uS14 family. As to quaternary structure, part of the 30S ribosomal subunit. Contacts proteins S3 and S10.

In terms of biological role, binds 16S rRNA, required for the assembly of 30S particles and may also be responsible for determining the conformation of the 16S rRNA at the A site. In Dichelobacter nodosus (strain VCS1703A), this protein is Small ribosomal subunit protein uS14.